Consider the following 197-residue polypeptide: Nascent polypeptide-associated complex subunit alpha (197 aa).

A compositionally biased stretch (basic and acidic residues) spans 1-18 (MTGSTETRHNEKDVKEPQ). Positions 1-30 (MTGSTETRHNEKDVKEPQVDSDADSDNEAI) are disordered. A compositionally biased stretch (acidic residues) spans 19 to 28 (VDSDADSDNE). The NAC-A/B domain maps to 58–123 (SRSEKKARKL…AKIEDLTQHA (66 aa)). The tract at residues 134-155 (TREAPQLKTVEEDDNEDVEEDS) is disordered. Residues 144-155 (EEDDNEDVEEDS) are compositionally biased toward acidic residues. Residues 158–195 (IEEKDIELVISQANTTRNKAIRALKDADNDIVNAIMSL) form the UBA domain.

It belongs to the NAC-alpha family.

Functionally, may promote appropriate targeting of ribosome-nascent polypeptide complexes. This chain is Nascent polypeptide-associated complex subunit alpha, found in Caenorhabditis briggsae.